We begin with the raw amino-acid sequence, 226 residues long: Large ribosomal subunit protein uL3 (226 aa).

Polar residues predominate over residues Met-135–Val-150. Positions Met-135 to Gln-158 are disordered. Gln-158 carries the post-translational modification N5-methylglutamine.

This sequence belongs to the universal ribosomal protein uL3 family. As to quaternary structure, part of the 50S ribosomal subunit. Forms a cluster with proteins L14 and L19. In terms of processing, methylated by PrmB.

In terms of biological role, one of the primary rRNA binding proteins, it binds directly near the 3'-end of the 23S rRNA, where it nucleates assembly of the 50S subunit. The sequence is that of Large ribosomal subunit protein uL3 from Variovorax paradoxus (strain S110).